The primary structure comprises 488 residues: Cobyric acid synthase (488 aa).

One can recognise a GATase cobBQ-type domain in the interval 254–442; sequence KFKIVVPVLP…VHGLFGMDTQ (189 aa). The active-site Nucleophile is the Cys-336. The active site involves His-434.

Belongs to the CobB/CobQ family. CobQ subfamily.

It functions in the pathway cofactor biosynthesis; adenosylcobalamin biosynthesis. Its function is as follows. Catalyzes amidations at positions B, D, E, and G on adenosylcobyrinic A,C-diamide. NH(2) groups are provided by glutamine, and one molecule of ATP is hydrogenolyzed for each amidation. This chain is Cobyric acid synthase, found in Beijerinckia indica subsp. indica (strain ATCC 9039 / DSM 1715 / NCIMB 8712).